The chain runs to 701 residues: Ribosomal RNA large subunit methyltransferase K/L (701 aa).

Positions 43 to 154 (LLYQSLMWSR…KETAHISLDL (112 aa)) constitute a THUMP domain.

It belongs to the methyltransferase superfamily. RlmKL family.

It localises to the cytoplasm. It carries out the reaction guanosine(2445) in 23S rRNA + S-adenosyl-L-methionine = N(2)-methylguanosine(2445) in 23S rRNA + S-adenosyl-L-homocysteine + H(+). It catalyses the reaction guanosine(2069) in 23S rRNA + S-adenosyl-L-methionine = N(2)-methylguanosine(2069) in 23S rRNA + S-adenosyl-L-homocysteine + H(+). In terms of biological role, specifically methylates the guanine in position 2445 (m2G2445) and the guanine in position 2069 (m7G2069) of 23S rRNA. The chain is Ribosomal RNA large subunit methyltransferase K/L from Klebsiella pneumoniae (strain 342).